The following is a 258-amino-acid chain: Imidazole glycerol phosphate synthase subunit HisF (258 aa).

Catalysis depends on residues Asp11 and Asp130.

Belongs to the HisA/HisF family. Heterodimer of HisH and HisF.

Its subcellular location is the cytoplasm. It catalyses the reaction 5-[(5-phospho-1-deoxy-D-ribulos-1-ylimino)methylamino]-1-(5-phospho-beta-D-ribosyl)imidazole-4-carboxamide + L-glutamine = D-erythro-1-(imidazol-4-yl)glycerol 3-phosphate + 5-amino-1-(5-phospho-beta-D-ribosyl)imidazole-4-carboxamide + L-glutamate + H(+). Its pathway is amino-acid biosynthesis; L-histidine biosynthesis; L-histidine from 5-phospho-alpha-D-ribose 1-diphosphate: step 5/9. Its function is as follows. IGPS catalyzes the conversion of PRFAR and glutamine to IGP, AICAR and glutamate. The HisF subunit catalyzes the cyclization activity that produces IGP and AICAR from PRFAR using the ammonia provided by the HisH subunit. In Stenotrophomonas maltophilia (strain K279a), this protein is Imidazole glycerol phosphate synthase subunit HisF.